A 453-amino-acid chain; its full sequence is Putative receptor-like protein kinase At2g30940 (453 aa).

Residues 60 to 80 (ASASIAFLLVLIISVLLCFIF) form a helical membrane-spanning segment. A Phosphothreonine modification is found at T155. Positions 166–428 (FADDNVITKG…IHMLQPHDLL (263 aa)) constitute a Protein kinase domain. ATP is bound by residues 172–180 (ITKGDSSTV) and K194. Y240 is modified (phosphotyrosine). D293 functions as the Proton acceptor in the catalytic mechanism. A Phosphoserine modification is found at S297. T322 bears the Phosphothreonine mark.

The protein belongs to the protein kinase superfamily.

It is found in the cell membrane. It catalyses the reaction L-seryl-[protein] + ATP = O-phospho-L-seryl-[protein] + ADP + H(+). The catalysed reaction is L-threonyl-[protein] + ATP = O-phospho-L-threonyl-[protein] + ADP + H(+). The protein is Putative receptor-like protein kinase At2g30940 of Arabidopsis thaliana (Mouse-ear cress).